A 233-amino-acid polypeptide reads, in one-letter code: MKRKRCEMEETTKKKKMTEIGSAIEELSVLSIAKTTIVTTEKEAINIINLPLKPLLSFCNIIVQVLDKIGPTMAVLRHDIDQNIQRLEKMWESDPLVYSNLVEILRKEAKEGSSRKPKSCSRAALWLTRAMDFTLALLQRLVKDMSQNMEQAIEECYNLTIKPWHGWISSAAFKVALKLVPNNNTFINVLAAKDETHQMVQDDITSLISLLIPLLSQLHSILELYEVSKLKSP.

A ganglioside GM3 (d18:1(4E)) contacts are provided by aspartate 79, asparagine 83, tryptophan 126, and histidine 165.

Belongs to the GLTP family.

Its function is as follows. May be involved in glycolipids transfer. The polypeptide is Glycolipid transfer protein 3 (Arabidopsis thaliana (Mouse-ear cress)).